Consider the following 222-residue polypeptide: Voltage-dependent calcium channel gamma-1 subunit (222 aa).

Residues 1 to 10 (MSPTEAPKVR) lie on the Cytoplasmic side of the membrane. A helical membrane pass occupies residues 11-29 (VTLFCILVGIVLAMTAVVS). The Extracellular portion of the chain corresponds to 30–108 (DHWAVLSPHM…TQKEYSISAA (79 aa)). Residues N43 and N79 are each glycosylated (N-linked (GlcNAc...) asparagine). C57 and C80 are disulfide-bonded. The chain crosses the membrane as a helical span at residues 109–129 (AISVFSLGFLIMGTICALMAF). Residues 130 to 134 (RKKRD) are Cytoplasmic-facing. Residues 135–155 (YLLRPASMFYVFAGLCLFVSL) traverse the membrane as a helical segment. At 156 to 179 (EVMRQSVKRMIDSEDTVWIEYYYS) the chain is on the extracellular side. A helical membrane pass occupies residues 180–204 (WSFACACAAFVLLFLGGISLLLFSL). Topologically, residues 205–222 (PRMPQNPWESCMDAEPEH) are cytoplasmic.

This sequence belongs to the PMP-22/EMP/MP20 family. CACNG subfamily. As to quaternary structure, component of a calcium channel complex consisting of a pore-forming alpha subunit (CACNA1S) and the ancillary subunits CACNB1 or CACNB2, CACNG1 and CACNA2D1. The channel complex contains alpha, beta, gamma and delta subunits in a 1:1:1:1 ratio, i.e. it contains either CACNB1 or CACNB2. Post-translationally, N-glycosylated. In terms of tissue distribution, skeletal muscle (at protein level).

The protein localises to the cell membrane. It is found in the sarcolemma. Regulatory subunit of the voltage-gated calcium channel that gives rise to L-type calcium currents in skeletal muscle. Regulates channel inactivation kinetics. The sequence is that of Voltage-dependent calcium channel gamma-1 subunit (CACNG1) from Oryctolagus cuniculus (Rabbit).